Reading from the N-terminus, the 445-residue chain is Phosphoglucosamine mutase 1 (445 aa).

S102 functions as the Phosphoserine intermediate in the catalytic mechanism. Mg(2+) is bound by residues S102, D241, D243, and D245. The residue at position 102 (S102) is a Phosphoserine.

It belongs to the phosphohexose mutase family. It depends on Mg(2+) as a cofactor. Activated by phosphorylation.

It catalyses the reaction alpha-D-glucosamine 1-phosphate = D-glucosamine 6-phosphate. Functionally, catalyzes the conversion of glucosamine-6-phosphate to glucosamine-1-phosphate. The chain is Phosphoglucosamine mutase 1 from Shewanella sp. (strain MR-4).